A 187-amino-acid polypeptide reads, in one-letter code: UPF0301 protein YqgE (187 aa).

It belongs to the UPF0301 (AlgH) family.

The sequence is that of UPF0301 protein YqgE from Salmonella heidelberg (strain SL476).